The primary structure comprises 136 residues: Nucleoside diphosphate kinase (136 aa).

Residues K10, F58, R86, T92, R104, and N114 each contribute to the ATP site. The active-site Pros-phosphohistidine intermediate is H117.

This sequence belongs to the NDK family. Homotetramer. Mg(2+) is required as a cofactor.

It is found in the cytoplasm. The catalysed reaction is a 2'-deoxyribonucleoside 5'-diphosphate + ATP = a 2'-deoxyribonucleoside 5'-triphosphate + ADP. It carries out the reaction a ribonucleoside 5'-diphosphate + ATP = a ribonucleoside 5'-triphosphate + ADP. Functionally, major role in the synthesis of nucleoside triphosphates other than ATP. The ATP gamma phosphate is transferred to the NDP beta phosphate via a ping-pong mechanism, using a phosphorylated active-site intermediate. The chain is Nucleoside diphosphate kinase from Mycobacterium sp. (strain MCS).